Consider the following 115-residue polypeptide: Putative gamma-glutamylcyclotransferase VC_2546 (115 aa).

8–11 lines the substrate pocket; that stretch reads YGTL. Glu73 serves as the catalytic Proton acceptor.

The protein belongs to the gamma-glutamylcyclotransferase family.

In terms of biological role, putative gamma-glutamylcyclotransferase. In Vibrio cholerae serotype O1 (strain ATCC 39315 / El Tor Inaba N16961), this protein is Putative gamma-glutamylcyclotransferase VC_2546.